The chain runs to 183 residues: Ribosome rescue factor SmrB (183 aa).

The region spanning 98–173 is the Smr domain; that stretch reads LDLHGLTQLQ…GDAALLVLIE (76 aa).

It belongs to the SmrB family. As to quaternary structure, associates with collided ribosomes, but not with correctly translating polysomes.

Functionally, acts as a ribosome collision sensor. Detects stalled/collided disomes (pairs of ribosomes where the leading ribosome is stalled and a second ribosome has collided with it) and endonucleolytically cleaves mRNA at the 5' boundary of the stalled ribosome. Stalled/collided disomes form a new interface (primarily via the 30S subunits) that binds SmrB. Cleaved mRNA becomes available for tmRNA ligation, leading to ribosomal subunit dissociation and rescue of stalled ribosomes. The polypeptide is Ribosome rescue factor SmrB (Escherichia coli (strain 55989 / EAEC)).